The following is a 196-amino-acid chain: MDDTLFQLKFTAKQLEKLAKKAEKDSNTEQAKVKKALQQKNVEVARVYAENAIRKKNEGLNWLRMASRVDAVASKVQTAVTMKGVTKNMAQVTKALDKALSSMDLQKVSAVMDKFDQQVQNLDVHTSVMEDSMSSAMTLTTPQEQVDNLIVQIAEENGLEVMDQLNQLPQGASSVGESSTRTQEDQLSRRLASLRN.

Positions 5-41 (LFQLKFTAKQLEKLAKKAEKDSNTEQAKVKKALQQKN) form a coiled coil. The segment covering 170–181 (QGASSVGESSTR) has biased composition (polar residues). Residues 170–196 (QGASSVGESSTRTQEDQLSRRLASLRN) form a disordered region. An MIT-interacting motif motif is present at residues 185-195 (DQLSRRLASLR).

Belongs to the SNF7 family. In terms of assembly, probable peripherally associated component of the endosomal sorting required for transport complex III (ESCRT-III).

The protein resides in the cytoplasm. Its subcellular location is the endosome membrane. In terms of biological role, probable peripherally associated component of the endosomal sorting required for transport complex III (ESCRT-III) which is involved in multivesicular bodies (MVBs) formation and sorting of endosomal cargo proteins into MVBs. MVBs contain intraluminal vesicles (ILVs) that are generated by invagination and scission from the limiting membrane of the endosome and mostly are delivered to lysosomes enabling degradation of membrane proteins, such as stimulated growth factor receptors, lysosomal enzymes and lipids. The protein is Charged multivesicular body protein 1a (chmp1a) of Xenopus laevis (African clawed frog).